Consider the following 315-residue polypeptide: Cobalamin biosynthesis protein CobD (315 aa).

5 consecutive transmembrane segments (helical) span residues 48 to 70 (IAGI…LSVQ), 75 to 94 (LHWI…TIAI), 148 to 170 (LVDG…AMLY), 208 to 230 (ITSY…SLYI), and 292 to 314 (LILL…AAYF).

Belongs to the CobD/CbiB family.

It localises to the cell membrane. It participates in cofactor biosynthesis; adenosylcobalamin biosynthesis. Converts cobyric acid to cobinamide by the addition of aminopropanol on the F carboxylic group. This is Cobalamin biosynthesis protein CobD from Leptospira interrogans serogroup Icterohaemorrhagiae serovar copenhageni (strain Fiocruz L1-130).